The primary structure comprises 167 residues: Phosphopantetheine adenylyltransferase (167 aa).

Substrate is bound at residue threonine 10. ATP is bound by residues threonine 10–phenylalanine 11 and histidine 18. Positions 77 and 91 each coordinate substrate. ATP is bound by residues glycine 92 to arginine 94, glutamate 102, and tyrosine 127 to serine 133.

It belongs to the bacterial CoaD family. In terms of assembly, homohexamer. Mg(2+) serves as cofactor.

The protein resides in the cytoplasm. The enzyme catalyses (R)-4'-phosphopantetheine + ATP + H(+) = 3'-dephospho-CoA + diphosphate. Its pathway is cofactor biosynthesis; coenzyme A biosynthesis; CoA from (R)-pantothenate: step 4/5. Functionally, reversibly transfers an adenylyl group from ATP to 4'-phosphopantetheine, yielding dephospho-CoA (dPCoA) and pyrophosphate. The polypeptide is Phosphopantetheine adenylyltransferase (Thermomicrobium roseum (strain ATCC 27502 / DSM 5159 / P-2)).